Here is a 258-residue protein sequence, read N- to C-terminus: Regulatory protein RecX (258 aa).

Belongs to the RecX family.

It is found in the cytoplasm. In terms of biological role, modulates RecA activity. The sequence is that of Regulatory protein RecX from Streptococcus pyogenes serotype M3 (strain ATCC BAA-595 / MGAS315).